The sequence spans 291 residues: Diaminopimelate epimerase (291 aa).

Substrate-binding residues include asparagine 13, glutamine 46, and asparagine 66. The active-site Proton donor is cysteine 75. Residues 76–77 (GN), asparagine 170, asparagine 203, and 221–222 (ER) each bind substrate. Cysteine 230 (proton acceptor) is an active-site residue. Substrate is bound at residue 231-232 (GS).

It belongs to the diaminopimelate epimerase family. Homodimer.

It is found in the cytoplasm. The catalysed reaction is (2S,6S)-2,6-diaminopimelate = meso-2,6-diaminopimelate. The protein operates within amino-acid biosynthesis; L-lysine biosynthesis via DAP pathway; DL-2,6-diaminopimelate from LL-2,6-diaminopimelate: step 1/1. In terms of biological role, catalyzes the stereoinversion of LL-2,6-diaminopimelate (L,L-DAP) to meso-diaminopimelate (meso-DAP), a precursor of L-lysine and an essential component of the bacterial peptidoglycan. This is Diaminopimelate epimerase from Albidiferax ferrireducens (strain ATCC BAA-621 / DSM 15236 / T118) (Rhodoferax ferrireducens).